A 517-amino-acid chain; its full sequence is Xaa-Pro dipeptidase (517 aa).

Mn(2+) contacts are provided by Asp244, Asp255, His336, Glu381, and Glu420.

This sequence belongs to the peptidase M24B family. Bacterial-type prolidase subfamily. In terms of assembly, monomer. Mn(2+) is required as a cofactor.

It catalyses the reaction Xaa-L-Pro dipeptide + H2O = an L-alpha-amino acid + L-proline. It carries out the reaction diisopropyl fluorophosphate + H2O = diisopropyl phosphate + fluoride + 2 H(+). The enzyme catalyses An aryl dialkyl phosphate + H2O = dialkyl phosphate + an aryl alcohol.. Splits dipeptides with a prolyl or hydroxyprolyl residue in the C-terminal position and a nonpolar amino acid at the N-terminal position. Also catalyzes the hydrolysis of toxic organophosphorus cholinesterase-inhibiting compounds including insecticide paraoxon and nerve gases such as diisopropylfluorophosphate (DFP), O-isopropyl methylphosphonofluoridate (sarin), O-pinacolyl methylphosphonofluoridate (soman), and O-cyclohexyl methylphosphonofluoridate. The chain is Xaa-Pro dipeptidase (pepQ) from Alteromonas sp.